Here is a 74-residue protein sequence, read N- to C-terminus: Antimicrobial peptide HsAp1 (74 aa).

The N-terminal stretch at 1–21 (MSRRVILTLVLVTILVKTMAG) is a signal peptide. A propeptide spanning residues 22-33 (MESKKVETTDEI) is cleaved from the precursor. Residue Pro65 is modified to Proline amide. The propeptide occupies 69–74 (AISEQT).

Belongs to the non-disulfide-bridged peptide (NDBP) superfamily. Medium-length antimicrobial peptide (group 3) family. In terms of tissue distribution, expressed by the venom gland.

The protein resides in the secreted. The protein localises to the target cell membrane. Its function is as follows. Possesses antimicrobial activity against both Gram-negative (MIC=23.8-51.2 uM) and Gram-positive (MIC=11.8-46.5 uM) bacteria, as well as against the fungus C.tropicalis (MIC=48.6 uM). Also possesses a relatively high hemolytic activity. May act by disrupting the integrity of the bacterial cell membrane. This Heterometrus spinifer (Asia giant forest scorpion) protein is Antimicrobial peptide HsAp1.